The sequence spans 49 residues: Large ribosomal subunit protein bL36 (49 aa).

This sequence belongs to the bacterial ribosomal protein bL36 family.

The sequence is that of Large ribosomal subunit protein bL36 from Pseudomonas fluorescens (strain ATCC BAA-477 / NRRL B-23932 / Pf-5).